A 409-amino-acid polypeptide reads, in one-letter code: Dual-specificity RNA methyltransferase RlmN (409 aa).

Glu121 (proton acceptor) is an active-site residue. A Radical SAM core domain is found at 127–376 (EEGRGTLCIS…IRTPRGRDIL (250 aa)). Cys134 and Cys379 are joined by a disulfide. [4Fe-4S] cluster is bound by residues Cys141, Cys145, and Cys148. S-adenosyl-L-methionine-binding positions include 205–206 (GE), Ser237, 259–261 (SLH), and Asn336. The active-site S-methylcysteine intermediate is Cys379.

This sequence belongs to the radical SAM superfamily. RlmN family. [4Fe-4S] cluster is required as a cofactor.

It is found in the cytoplasm. It carries out the reaction adenosine(2503) in 23S rRNA + 2 reduced [2Fe-2S]-[ferredoxin] + 2 S-adenosyl-L-methionine = 2-methyladenosine(2503) in 23S rRNA + 5'-deoxyadenosine + L-methionine + 2 oxidized [2Fe-2S]-[ferredoxin] + S-adenosyl-L-homocysteine. It catalyses the reaction adenosine(37) in tRNA + 2 reduced [2Fe-2S]-[ferredoxin] + 2 S-adenosyl-L-methionine = 2-methyladenosine(37) in tRNA + 5'-deoxyadenosine + L-methionine + 2 oxidized [2Fe-2S]-[ferredoxin] + S-adenosyl-L-homocysteine. Functionally, specifically methylates position 2 of adenine 2503 in 23S rRNA and position 2 of adenine 37 in tRNAs. m2A2503 modification seems to play a crucial role in the proofreading step occurring at the peptidyl transferase center and thus would serve to optimize ribosomal fidelity. This Agrobacterium fabrum (strain C58 / ATCC 33970) (Agrobacterium tumefaciens (strain C58)) protein is Dual-specificity RNA methyltransferase RlmN.